The following is a 210-amino-acid chain: MTNWNYQLTHFVTSAPDIRHLPADTGIEVAFAGRSNAGKSSALNTLTNQKSLARTSKTPGRTQLINLFEVAEGKRLVDLPGYGYAQVPEEMKIKWQRALGEYLEKRLCLKGLVVLMDIRHPLKDLDQQMIEWAVESDIQVLVLLTKADKLASGARKAQVNMVREAVLAFNGDIQVEPFSSLKKSGVDKLRQKLDSWFNEIPPQEAVEDAE.

In terms of domain architecture, EngB-type G spans 25-199; the sequence is TGIEVAFAGR…RQKLDSWFNE (175 aa). Residues 33 to 40, 60 to 64, 78 to 81, 145 to 148, and 178 to 180 contribute to the GTP site; these read GRSNAGKS, GRTQL, DLPG, TKAD, and FSS. Residues Ser40 and Thr62 each coordinate Mg(2+).

This sequence belongs to the TRAFAC class TrmE-Era-EngA-EngB-Septin-like GTPase superfamily. EngB GTPase family. Mg(2+) is required as a cofactor.

Functionally, necessary for normal cell division and for the maintenance of normal septation. The sequence is that of Probable GTP-binding protein EngB from Klebsiella pneumoniae (strain 342).